The sequence spans 438 residues: Argininosuccinate lyase (438 aa).

It belongs to the lyase 1 family. Argininosuccinate lyase subfamily.

Its subcellular location is the cytoplasm. It catalyses the reaction 2-(N(omega)-L-arginino)succinate = fumarate + L-arginine. It functions in the pathway amino-acid biosynthesis; L-arginine biosynthesis; L-arginine from L-ornithine and carbamoyl phosphate: step 3/3. In Clostridium tetani (strain Massachusetts / E88), this protein is Argininosuccinate lyase.